Consider the following 732-residue polypeptide: Ferric aerobactin receptor (732 aa).

The first 25 residues, 1–25, serve as a signal peptide directing secretion; that stretch reads MMISKKYTLWALNPLLLTMMAPAVA. Positions 31–38 match the TonB box motif; the sequence is ETFVVSAN. Residues 43–153 form the TBDR plug domain; sequence TVAEMAQTTW…TGGLINIVTK (111 aa). In terms of domain architecture, TBDR beta-barrel spans 158–732; it reads ETMMEFEAGT…TFGLNYSVLF (575 aa). The TonB C-terminal box motif lies at 715–732; sequence YDYKGRGRTFGLNYSVLF.

The protein belongs to the TonB-dependent receptor family.

It localises to the cell outer membrane. Functionally, receptor for cloacin DF13/aerobactin. The protein is Ferric aerobactin receptor (iutA) of Escherichia coli.